A 270-amino-acid chain; its full sequence is Formamidopyrimidine-DNA glycosylase (270 aa).

P2 serves as the catalytic Schiff-base intermediate with DNA. Catalysis depends on E3, which acts as the Proton donor. K57 acts as the Proton donor; for beta-elimination activity in catalysis. Residues H90, R109, and K151 each contribute to the DNA site. The segment at 236–270 (RVYGRKGQACEVCESEIQSVTLGQRNTFFCEQCQK) adopts an FPG-type zinc-finger fold. Residue R260 is the Proton donor; for delta-elimination activity of the active site.

Belongs to the FPG family. In terms of assembly, monomer. Requires Zn(2+) as cofactor.

The enzyme catalyses Hydrolysis of DNA containing ring-opened 7-methylguanine residues, releasing 2,6-diamino-4-hydroxy-5-(N-methyl)formamidopyrimidine.. It carries out the reaction 2'-deoxyribonucleotide-(2'-deoxyribose 5'-phosphate)-2'-deoxyribonucleotide-DNA = a 3'-end 2'-deoxyribonucleotide-(2,3-dehydro-2,3-deoxyribose 5'-phosphate)-DNA + a 5'-end 5'-phospho-2'-deoxyribonucleoside-DNA + H(+). In terms of biological role, involved in base excision repair of DNA damaged by oxidation or by mutagenic agents. Acts as a DNA glycosylase that recognizes and removes damaged bases. Has a preference for oxidized purines, such as 7,8-dihydro-8-oxoguanine (8-oxoG). Has AP (apurinic/apyrimidinic) lyase activity and introduces nicks in the DNA strand. Cleaves the DNA backbone by beta-delta elimination to generate a single-strand break at the site of the removed base with both 3'- and 5'-phosphates. The protein is Formamidopyrimidine-DNA glycosylase of Pseudoalteromonas atlantica (strain T6c / ATCC BAA-1087).